A 132-amino-acid polypeptide reads, in one-letter code: Fluoride-specific ion channel FluC (132 aa).

Helical transmembrane passes span 5–25 (LVAI…LGMW), 36–56 (GTLA…ALFA), 68–88 (FVVT…AEMF), and 103–123 (IAVH…TFGA). Na(+) is bound by residues G75 and T78.

This sequence belongs to the fluoride channel Fluc/FEX (TC 1.A.43) family.

The protein localises to the cell inner membrane. The enzyme catalyses fluoride(in) = fluoride(out). With respect to regulation, na(+) is not transported, but it plays an essential structural role and its presence is essential for fluoride channel function. In terms of biological role, fluoride-specific ion channel. Important for reducing fluoride concentration in the cell, thus reducing its toxicity. This Chromohalobacter salexigens (strain ATCC BAA-138 / DSM 3043 / CIP 106854 / NCIMB 13768 / 1H11) protein is Fluoride-specific ion channel FluC.